A 445-amino-acid polypeptide reads, in one-letter code: GTPase Der (445 aa).

EngA-type G domains are found at residues 3–167 (PVIA…YAGQ) and 180–353 (IKIA…AAAM). GTP contacts are provided by residues 9 to 16 (GRPNVGKS), 56 to 60 (DTGGF), 119 to 122 (NKAE), 186 to 193 (GRPNVGKS), 233 to 237 (DTAGL), and 298 to 301 (NKWD). Positions 354–438 (AKLPTPKLTR…PLRIEFRSSN (85 aa)) constitute a KH-like domain.

The protein belongs to the TRAFAC class TrmE-Era-EngA-EngB-Septin-like GTPase superfamily. EngA (Der) GTPase family. Associates with the 50S ribosomal subunit.

GTPase that plays an essential role in the late steps of ribosome biogenesis. The chain is GTPase Der from Burkholderia lata (strain ATCC 17760 / DSM 23089 / LMG 22485 / NCIMB 9086 / R18194 / 383).